Reading from the N-terminus, the 189-residue chain is Peptide deformylase (189 aa).

Cysteine 93 and histidine 135 together coordinate Fe cation. Glutamate 136 is a catalytic residue. Histidine 139 provides a ligand contact to Fe cation.

It belongs to the polypeptide deformylase family. Fe(2+) serves as cofactor.

It carries out the reaction N-terminal N-formyl-L-methionyl-[peptide] + H2O = N-terminal L-methionyl-[peptide] + formate. Removes the formyl group from the N-terminal Met of newly synthesized proteins. Requires at least a dipeptide for an efficient rate of reaction. N-terminal L-methionine is a prerequisite for activity but the enzyme has broad specificity at other positions. The sequence is that of Peptide deformylase from Karelsulcia muelleri (strain GWSS) (Sulcia muelleri).